Reading from the N-terminus, the 467-residue chain is ATP-dependent protease ATPase subunit HslU (467 aa).

ATP is bound by residues Ile-20, 62–67 (GVGKTE), Asp-280, Glu-345, and Arg-417.

This sequence belongs to the ClpX chaperone family. HslU subfamily. As to quaternary structure, a double ring-shaped homohexamer of HslV is capped on each side by a ring-shaped HslU homohexamer. The assembly of the HslU/HslV complex is dependent on binding of ATP.

It localises to the cytoplasm. Its function is as follows. ATPase subunit of a proteasome-like degradation complex; this subunit has chaperone activity. The binding of ATP and its subsequent hydrolysis by HslU are essential for unfolding of protein substrates subsequently hydrolyzed by HslV. HslU recognizes the N-terminal part of its protein substrates and unfolds these before they are guided to HslV for hydrolysis. The chain is ATP-dependent protease ATPase subunit HslU from Ligilactobacillus salivarius (strain UCC118) (Lactobacillus salivarius).